Consider the following 259-residue polypeptide: Hydroxyacylglutathione hydrolase (259 aa).

Zn(2+) is bound by residues His-56, His-58, Asp-60, His-61, His-112, Asp-133, and His-171. The segment at 220-243 is disordered; it reads NPFLRTGETSVKEKADERSDAQNT. The span at 229-239 shows a compositional bias: basic and acidic residues; that stretch reads SVKEKADERSD.

It belongs to the metallo-beta-lactamase superfamily. Glyoxalase II family. In terms of assembly, monomer. Requires Zn(2+) as cofactor.

It carries out the reaction an S-(2-hydroxyacyl)glutathione + H2O = a 2-hydroxy carboxylate + glutathione + H(+). It participates in secondary metabolite metabolism; methylglyoxal degradation; (R)-lactate from methylglyoxal: step 2/2. Its function is as follows. Thiolesterase that catalyzes the hydrolysis of S-D-lactoyl-glutathione to form glutathione and D-lactic acid. In Pseudomonas syringae pv. syringae (strain B728a), this protein is Hydroxyacylglutathione hydrolase.